Consider the following 507-residue polypeptide: ESX-5 secretion system ATPase EccB5 (507 aa).

The chain crosses the membrane as a helical span at residues 56–76 (VVASVSAALVICLGSLLWSFI).

It belongs to the EccB family. In terms of assembly, part of the ESX-5 / type VII secretion system (T7SS), which is composed of cytosolic and membrane components. The ESX-5 membrane complex is composed of EccB5, EccC5, EccD5 and EccE5.

Its subcellular location is the cell inner membrane. An ATPase. Part of the ESX-5 specialized secretion system, which is responsible for the secretion of EsxN and a number of PE_PGRS and PPE proteins. The polypeptide is ESX-5 secretion system ATPase EccB5 (Mycobacterium marinum (strain ATCC BAA-535 / M)).